We begin with the raw amino-acid sequence, 264 residues long: MFLIDSHCHLDRLNYNLPLENIEDVLKKSYQNHVKNFLTVSTCISNFYNIKKLFKKYNTIFYSCGVHPLNCKKELNLFHTIENLSNEIKKLSCIKDVIALGETGLDYYYSSDTKKIQQDFFREHIRVAIKLKKPIIVHSRNASEDTIKILQEENAEKCKGVLHSFTGDYNTACKLLDLGFYISCSGIITFKNSLELCKTIRKIPLNRLLIETDSPYLSPAPYRGKGNQPAYLFYIAEYLSILKEIDIHALGHITTSNFRTLFNI.

The a divalent metal cation site is built by His-7, His-9, Glu-102, His-138, His-163, and Asp-213.

The protein belongs to the metallo-dependent hydrolases superfamily. TatD-type hydrolase family. A divalent metal cation is required as a cofactor.

This is an uncharacterized protein from Buchnera aphidicola subsp. Acyrthosiphon pisum (strain APS) (Acyrthosiphon pisum symbiotic bacterium).